Here is a 705-residue protein sequence, read N- to C-terminus: Polyribonucleotide nucleotidyltransferase (705 aa).

The Mg(2+) site is built by Asp-487 and Asp-493. The KH domain maps to 554–613 (PKILTMKINPDKIRDVIGPSGKQINKIIEDTGVKIDIEQDGTIFISSTEEDMNQKAKKII). The region spanning 623 to 691 (GQLYLGKVKR…KQGRVNLSRK (69 aa)) is the S1 motif domain.

It belongs to the polyribonucleotide nucleotidyltransferase family. Mg(2+) is required as a cofactor.

It is found in the cytoplasm. The catalysed reaction is RNA(n+1) + phosphate = RNA(n) + a ribonucleoside 5'-diphosphate. Functionally, involved in mRNA degradation. Catalyzes the phosphorolysis of single-stranded polyribonucleotides processively in the 3'- to 5'-direction. The polypeptide is Polyribonucleotide nucleotidyltransferase (Bacillus pumilus (strain SAFR-032)).